The primary structure comprises 197 residues: Ribonuclease HII (197 aa).

In terms of domain architecture, RNase H type-2 spans 9-197 (ELIAGVDEVG…APVKKALEQF (189 aa)). D15, E16, and D107 together coordinate a divalent metal cation.

This sequence belongs to the RNase HII family. It depends on Mn(2+) as a cofactor. The cofactor is Mg(2+).

It is found in the cytoplasm. It carries out the reaction Endonucleolytic cleavage to 5'-phosphomonoester.. Functionally, endonuclease that specifically degrades the RNA of RNA-DNA hybrids. The protein is Ribonuclease HII of Haemophilus influenzae (strain 86-028NP).